The primary structure comprises 322 residues: Basic 30 kDa endochitinase (322 aa).

The N-terminal stretch at 1-22 is a signal peptide; it reads MRLSEFTTLFLLFSVLLLSASA. The Chitin-binding type-1 domain maps to 23-64; sequence EQCGSQAGGALCASGLCCSKFGWCGNTNEYCGPGNCQSQCPG. 4 disulfides stabilise this stretch: C25–C40, C34–C46, C39–C53, and C58–C62. Residues P66 and P68 each carry the 4-hydroxyproline modification. 3 cysteine pairs are disulfide-bonded: C93–C156, C168–C176, and C275–C307. Catalysis depends on E138, which acts as the Proton donor. Positions 316 to 322 are cleaved as a propeptide — removed in mature form; the sequence is GLLVDIM.

The protein belongs to the glycosyl hydrolase 19 family. Chitinase class I subfamily. The 4-hydroxyproline residues are not glycosylated in this plant vacuolar protein.

It is found in the vacuole. The protein localises to the secreted. It localises to the cell wall. It carries out the reaction Random endo-hydrolysis of N-acetyl-beta-D-glucosaminide (1-&gt;4)-beta-linkages in chitin and chitodextrins.. Defense against chitin-containing fungal pathogens. The chain is Basic 30 kDa endochitinase (CHI9) from Solanum lycopersicum (Tomato).